The chain runs to 328 residues: Probable voltage-gated potassium channel subunit beta (328 aa).

NADP(+) is bound by residues Trp-21, Gln-27, and Asp-49. Residue Tyr-54 is the Proton donor/acceptor of the active site. NADP(+) is bound by residues Ser-152, Gln-178, Trp-207, Ser-208, Pro-209, Leu-210, Ala-211, Lys-218, Arg-229, Gly-285, Thr-287, Gln-291, Glu-294, and Asn-295.

Belongs to the shaker potassium channel beta subunit family. In terms of assembly, forms heteromultimeric complexes with potassium channel alpha subunits. In terms of tissue distribution, expressed in roots, leaves and flowers (at protein level).

Its function is as follows. Probable accessory potassium channel protein which modulates the activity of the pore-forming alpha subunit. This is Probable voltage-gated potassium channel subunit beta (KAB1) from Arabidopsis thaliana (Mouse-ear cress).